The sequence spans 149 residues: Protein cornichon homolog 2 (149 aa).

The next 3 helical transmembrane spans lie at Ile-3–Ala-23, Ala-59–Val-79, and Tyr-117–Ile-137.

The protein belongs to the cornichon family.

It localises to the endoplasmic reticulum membrane. The protein resides in the golgi apparatus membrane. In terms of biological role, acts as a cargo receptor necessary for the transportation of secretory proteins from the endoplasmic reticulum (ER) in COPII-coated vesicles targeted to the Golgi apparatus. The polypeptide is Protein cornichon homolog 2 (Oryza sativa subsp. japonica (Rice)).